Here is a 152-residue protein sequence, read N- to C-terminus: MSQLCPCGSAVEYSLCCHPYVSGEKVAPDPEHLMRSRYCAFVMKDADYLIKTWHPSCGAAALRAELMAGFAHTEWLGLTVFEHCWQDADNIGFVSFVARFTEGGKTGAIIERSRFLKENGQWYYIDGTRPQFGRNDPCPCGSGKKFKKCCGQ.

Belongs to the UPF0225 family.

This chain is UPF0225 protein YchJ, found in Escherichia coli O7:K1 (strain IAI39 / ExPEC).